A 344-amino-acid polypeptide reads, in one-letter code: uncharacterized protein (344 aa).

A compositionally biased stretch (basic and acidic residues) spans 323-332 (KQQEQREQGR). The disordered stretch occupies residues 323–344 (KQQEQREQGRRAAYLQQRGMER).

This is an uncharacterized protein from Bacillus anthracis.